We begin with the raw amino-acid sequence, 527 residues long: MKMLHRSALLEQLLSSPKTLHQLPASTLVEHALQRNEGILTDSGALAVKTGLYTGRSPQDKFIVDEPMSRDSIHWGATNKPISSEVFTRLKDKVLHYLQQKEVRYASVGFAGADPSFQLPITYLNEFAWHHLFARQLFIREQAPSNNGLEPFTIISAPTFKADPSVDGTRSEAFVIISFEQRIILIGGTEYAGEMKKAIFSVMNYLLPEAGVLPMHCSANTTDEGETALFFGLSGTGKTTLSASEHRRLIGDDEHGWSEKGIFNIEGGCYAKCIGLSKESEPQIWDAIAFGAVLENVVVDPNTGKPDFKSGELTENTRAAYPLEAIPNALLPSVAGPPKAIIFLTADAFGVLPPISKLTKEQAMYHFLSGYTSKLAGTERGITQPEATFSTCFGAPFLPRKPEEYATMLGDKLENDDVQVFLVNTGWTGGSYGTGTRIKLAYTRAMVEAALQGKLDEIETVCDPIFGLYVPTHCPGVPDELLTPRRVWKDEAAYEATALQLAKQFHENFSAFPAAKDSVRLAGPRLA.

Residues Arg56, Tyr191, and Lys197 each contribute to the substrate site. ATP is bound by residues Lys197, His216, and 232-240; that span reads GLSGTGKTT. 2 residues coordinate Mn(2+): Lys197 and His216. Asp253 lines the Mn(2+) pocket. Residues Glu281, Arg318, 437-438, and Thr443 each bind ATP; that span reads RI. Arg318 contributes to the substrate binding site.

The protein belongs to the phosphoenolpyruvate carboxykinase (ATP) family. It depends on Mn(2+) as a cofactor.

Its subcellular location is the cytoplasm. The enzyme catalyses oxaloacetate + ATP = phosphoenolpyruvate + ADP + CO2. It participates in carbohydrate biosynthesis; gluconeogenesis. Functionally, involved in the gluconeogenesis. Catalyzes the conversion of oxaloacetate (OAA) to phosphoenolpyruvate (PEP) through direct phosphoryl transfer between the nucleoside triphosphate and OAA. The sequence is that of Phosphoenolpyruvate carboxykinase (ATP) from Shouchella clausii (strain KSM-K16) (Alkalihalobacillus clausii).